The sequence spans 414 residues: Tryptophan synthase beta chain (414 aa).

A compositionally biased stretch (basic and acidic residues) spans 1 to 26 (MVSTFSRKDQNYKNDDLNQPSKEGRF). A disordered region spans residues 1–27 (MVSTFSRKDQNYKNDDLNQPSKEGRFG). At Lys109 the chain carries N6-(pyridoxal phosphate)lysine.

This sequence belongs to the TrpB family. In terms of assembly, tetramer of two alpha and two beta chains. Pyridoxal 5'-phosphate serves as cofactor.

The enzyme catalyses (1S,2R)-1-C-(indol-3-yl)glycerol 3-phosphate + L-serine = D-glyceraldehyde 3-phosphate + L-tryptophan + H2O. It participates in amino-acid biosynthesis; L-tryptophan biosynthesis; L-tryptophan from chorismate: step 5/5. The beta subunit is responsible for the synthesis of L-tryptophan from indole and L-serine. In Prochlorococcus marinus (strain MIT 9301), this protein is Tryptophan synthase beta chain.